Reading from the N-terminus, the 85-residue chain is U4-theraphotoxin-Hhn1u (85 aa).

The first 22 residues, 1–22, serve as a signal peptide directing secretion; it reads MKMTLIAILTCAAVLVLHTTAA. Positions 23 to 48 are excised as a propeptide; sequence EELEAESQLMEVGMPDTELEAVDEER. Cystine bridges form between cysteine 52/cysteine 66, cysteine 56/cysteine 77, and cysteine 71/cysteine 82.

This sequence belongs to the neurotoxin 12 (Hwtx-2) family. 02 (Hwtx-2) subfamily. In terms of tissue distribution, expressed by the venom gland.

Its subcellular location is the secreted. Functionally, postsynaptic neurotoxin. The polypeptide is U4-theraphotoxin-Hhn1u (Cyriopagopus hainanus (Chinese bird spider)).